A 128-amino-acid chain; its full sequence is Organic solute transporter subunit beta (128 aa).

Residues methionine 1–aspartate 30 lie on the Extracellular side of the membrane. A helical transmembrane segment spans residues alanine 31–leucine 53. Residues arginine 54–serine 128 are Cytoplasmic-facing. 2 disordered regions span residues arginine 61–aspartate 80 and proline 101–serine 128. Composition is skewed to basic and acidic residues over residues glutamine 66–aspartate 80 and proline 101–serine 115. Serine 116 carries the post-translational modification Phosphoserine.

It belongs to the OST-beta family. Interacts with SLC51A. The Ost-alpha/Ost-beta complex is a heterodimer composed of alpha (SLC51A) and beta (SLC51B) subunit; induces the transport of SLC51A from the endoplasmic reticulum to the plasma membrane. Present at high level in ileum. In ileum, it is restricted to the apical domain on the mature villus enterocytes with little detectable expression in the goblet cells or crypt enterocytes (at protein level). Expressed in kidney but not in heart, brain, liver, spleen, embryo, lung, thymus, ovary nor testis.

The protein resides in the cell membrane. The enzyme catalyses taurocholate(out) = taurocholate(in). The catalysed reaction is tauroursodeoxycholate(out) = tauroursodeoxycholate(in). It carries out the reaction glycoursodeoxycholate(out) = glycoursodeoxycholate(in). It catalyses the reaction glycocholate(out) = glycocholate(in). The enzyme catalyses taurochenodeoxycholate(out) = taurochenodeoxycholate(in). The catalysed reaction is glycochenodeoxycholate(out) = glycochenodeoxycholate(in). It carries out the reaction taurodeoxycholate(out) = taurodeoxycholate(in). It catalyses the reaction glycodeoxycholate(out) = glycodeoxycholate(in). The enzyme catalyses prostaglandin E2(out) = prostaglandin E2(in). The catalysed reaction is estrone 3-sulfate(out) = estrone 3-sulfate(in). It carries out the reaction dehydroepiandrosterone 3-sulfate(out) = dehydroepiandrosterone 3-sulfate(in). Its function is as follows. Essential component of the Ost-alpha/Ost-beta complex, a heterodimer that acts as the intestinal basolateral transporter responsible for bile acid export from enterocytes into portal blood. The Ost-alpha/Ost-beta complex efficiently transports the major species of bile acids (taurocholate). Taurine conjugates are transported more efficiently across the basolateral membrane than glycine-conjugated bile acids. Can also transport steroids such as estrone 3-sulfate and dehydroepiandrosterone 3-sulfate, therefore playing a role in the enterohepatic circulation of sterols. Able to transport eicosanoids such as prostaglandin E2. Modulates SLC51A glycosylation, membrane trafficking and stability activities. This Mus musculus (Mouse) protein is Organic solute transporter subunit beta (Slc51b).